The sequence spans 98 residues: Large ribosomal subunit protein bL25 (98 aa).

Residues 1-22 (MANFVLNATARNEDKQGKGASR) form a disordered region.

It belongs to the bacterial ribosomal protein bL25 family. In terms of assembly, part of the 50S ribosomal subunit; part of the 5S rRNA/L5/L18/L25 subcomplex. Contacts the 5S rRNA. Binds to the 5S rRNA independently of L5 and L18.

In terms of biological role, this is one of the proteins that binds to the 5S RNA in the ribosome where it forms part of the central protuberance. The protein is Large ribosomal subunit protein bL25 of Acinetobacter baylyi (strain ATCC 33305 / BD413 / ADP1).